Consider the following 566-residue polypeptide: Viral IRF3-like protein (566 aa).

2 disordered regions span residues 151-170 (PRPF…PAFC) and 176-236 (QTGA…VHTD).

It belongs to the IRF family. In terms of assembly, interacts with host SKP2. Interacts with host USP7.

Functionally, plays a role in the inhibition of host immune response. Interferes with the transactivating potential of cellular IRFs IRF3 and IRF7 that play a critical role in the induction of IFNA and IFNB genes. Additionally, interferes with surface major histocompatibility complex class II (MHC-II) antigen presentation. This Human herpesvirus 8 type P (isolate GK18) (HHV-8) protein is Viral IRF3-like protein (vIRF-3).